Consider the following 194-residue polypeptide: Large ribosomal subunit protein bL9 (194 aa).

Positions Asp-169 to Ala-194 are disordered.

It belongs to the bacterial ribosomal protein bL9 family.

Binds to the 23S rRNA. This is Large ribosomal subunit protein bL9 from Mesorhizobium japonicum (strain LMG 29417 / CECT 9101 / MAFF 303099) (Mesorhizobium loti (strain MAFF 303099)).